The sequence spans 1046 residues: Phospholipase D zeta 2 (1046 aa).

Positions 45 to 205 constitute a PX domain; the sequence is PKAAIVSVSR…KEVCKFLEVS (161 aa). In terms of domain architecture, PH spans 215 to 343; that stretch reads SKMKEGYVTV…WVKAVDEAGC (129 aa). The PLD phosphodiesterase 1 domain maps to 472–499; the sequence is YLWSHHEKIVIVDYQVCFIGGLDLCFGR. Active-site residues include His477, Lys479, and Asp484. Over residues 653–667 the composition is skewed to basic and acidic residues; the sequence is GRGDLKLDSGARQDP. The tract at residues 653-677 is disordered; it reads GRGDLKLDSGARQDPGETSEESDLD. Residues 847–874 form the PLD phosphodiesterase 2 domain; sequence SQIYVHSKLMIVDDRIAVIGSSNINDRS. Catalysis depends on residues His852, Lys854, and Asp859.

This sequence belongs to the phospholipase D family. PXPH-PLD subfamily. Requires Does not require Ca(2+) or any other cation for activity. as cofactor. Expressed in seedlings, roots, leaves, stems and flowers. Highest expression in roots. Detected only in the meristematic regions up to 4 days after germination and then at later stages in all tissues.

It carries out the reaction a 1,2-diacyl-sn-glycero-3-phosphocholine + H2O = a 1,2-diacyl-sn-glycero-3-phosphate + choline + H(+). In terms of biological role, hydrolyzes glycerol-phospholipids at the terminal phosphodiesteric bond to generate phosphatidic acids (PA). Phosphatidylcholine-selective. Regulates vesicle trafficking and auxin responses. Required for the normal cycling of PIN-2 containing vesicles. Contributes to the supply of inorganic phosphorus for cell metabolism and diacylglycerol moieties for galactolipid synthesis in phosphorus-starved roots. Involved in root elongation during phosphate limitation. This chain is Phospholipase D zeta 2, found in Arabidopsis thaliana (Mouse-ear cress).